Consider the following 292-residue polypeptide: Zinc finger protein OZF (292 aa).

10 consecutive C2H2-type zinc fingers follow at residues 16 to 38, 44 to 66, 72 to 94, 100 to 122, 128 to 150, 156 to 178, 184 to 206, 212 to 234, 240 to 262, and 268 to 290; these read FACK…EHFH, FECN…QNTH, LECN…QKIH, FECK…QRTH, FICK…EKIH, FKCN…QNIH, YECN…VRIH, YECN…VRSH, YGCN…LRIH, and YQCS…QKIH. Glycyl lysine isopeptide (Lys-Gly) (interchain with G-Cter in SUMO2) cross-links involve residues Lys-28, Lys-51, and Lys-56. Glycyl lysine isopeptide (Lys-Gly) (interchain with G-Cter in SUMO) cross-links involve residues Lys-157 and Lys-169. A Glycyl lysine isopeptide (Lys-Gly) (interchain with G-Cter in SUMO2) cross-link involves residue Lys-173. Residues 212–292 form an interaction with TERF2IP region; the sequence is YECNVCGKAF…HIRHQKIHTH (81 aa).

The protein belongs to the krueppel C2H2-type zinc-finger protein family. As to quaternary structure, binds DNA. Interacts with SUMO conjugating enzyme UBC9/UBE2I. Interacts with the telomeric protein TERF2IP.

The protein resides in the nucleus. This Bos taurus (Bovine) protein is Zinc finger protein OZF (ZNF146).